A 138-amino-acid polypeptide reads, in one-letter code: Nucleoside diphosphate kinase (138 aa).

ATP is bound by residues K9, F57, R85, T91, R102, and N112. H115 acts as the Pros-phosphohistidine intermediate in catalysis.

Belongs to the NDK family. In terms of assembly, homotetramer. Mg(2+) is required as a cofactor.

The protein resides in the cytoplasm. It carries out the reaction a 2'-deoxyribonucleoside 5'-diphosphate + ATP = a 2'-deoxyribonucleoside 5'-triphosphate + ADP. It catalyses the reaction a ribonucleoside 5'-diphosphate + ATP = a ribonucleoside 5'-triphosphate + ADP. Its function is as follows. Major role in the synthesis of nucleoside triphosphates other than ATP. The ATP gamma phosphate is transferred to the NDP beta phosphate via a ping-pong mechanism, using a phosphorylated active-site intermediate. The protein is Nucleoside diphosphate kinase of Desulfatibacillum aliphaticivorans.